Here is an 833-residue protein sequence, read N- to C-terminus: Leucine--tRNA ligase (833 aa).

The 'HIGH' region motif lies at P41–H52. A 'KMSKS' region motif is present at residues K610 to S614. K613 serves as a coordination point for ATP.

This sequence belongs to the class-I aminoacyl-tRNA synthetase family.

It localises to the cytoplasm. The catalysed reaction is tRNA(Leu) + L-leucine + ATP = L-leucyl-tRNA(Leu) + AMP + diphosphate. This chain is Leucine--tRNA ligase, found in Streptococcus pyogenes serotype M28 (strain MGAS6180).